Consider the following 516-residue polypeptide: Putative transposase y4bL/y4kJ/y4tB (516 aa).

An HTH IS408-type domain is found at Ile-15–Leu-96. The region spanning Phe-138–Glu-319 is the Integrase catalytic domain. A disordered region spans residues Glu-493–Gln-516.

It belongs to the transposase IS21/IS408/IS1162 family.

This Sinorhizobium fredii (strain NBRC 101917 / NGR234) protein is Putative transposase y4bL/y4kJ/y4tB.